Consider the following 319-residue polypeptide: Acetyl esterase (319 aa).

An Involved in the stabilization of the negatively charged intermediate by the formation of the oxyanion hole motif is present at residues 91–93 (HGG). Residues Ser165, Asp262, and His292 contribute to the active site.

Belongs to the 'GDXG' lipolytic enzyme family. In terms of assembly, homodimer. Interacts with MalT and MelA.

It localises to the cytoplasm. In terms of biological role, displays esterase activity towards short chain fatty esters (acyl chain length of up to 8 carbons). Able to hydrolyze triacetylglycerol (triacetin) and tributyrylglycerol (tributyrin), but not trioleylglycerol (triolein) or cholesterol oleate. Negatively regulates MalT activity by antagonizing maltotriose binding. Inhibits MelA galactosidase activity. The protein is Acetyl esterase of Escherichia coli O7:K1 (strain IAI39 / ExPEC).